Consider the following 447-residue polypeptide: Phosphoglucosamine mutase (447 aa).

The Phosphoserine intermediate role is filled by Ser103. 4 residues coordinate Mg(2+): Ser103, Asp242, Asp244, and Asp246. At Ser103 the chain carries Phosphoserine.

This sequence belongs to the phosphohexose mutase family. Mg(2+) is required as a cofactor. Activated by phosphorylation.

The enzyme catalyses alpha-D-glucosamine 1-phosphate = D-glucosamine 6-phosphate. Catalyzes the conversion of glucosamine-6-phosphate to glucosamine-1-phosphate. This is Phosphoglucosamine mutase from Marinobacter nauticus (strain ATCC 700491 / DSM 11845 / VT8) (Marinobacter aquaeolei).